The chain runs to 225 residues: Small ribosomal subunit protein uS2 (225 aa).

Belongs to the universal ribosomal protein uS2 family.

The chain is Small ribosomal subunit protein uS2 from Metallosphaera sedula (strain ATCC 51363 / DSM 5348 / JCM 9185 / NBRC 15509 / TH2).